The chain runs to 456 residues: MLITKSSSECHVAVLAFPFSTHPGPLLNLVQRLAVEAPDVIFSFISTAKSNESLFSVPNPENIKPYPVWDGVPEGYVFARKPQEDINLFLKVAAKGFKLAMQAVEVETRRRIGWVMADAFLWFSSDMAEERGISWVPIWMSGGACSLSVHLYTDLIRETVGFSGISGRQNELLKFIPGFSELRLGDLPSGVLLGNLKSPFSIMLHKIGQALPKATTVLINSFEELDPELNKVLNSNFGKFLNIGPSNLTSPHPLSNSDEYGCIPWLAKQRSASVAYIGFGSVAKPKPDEVVAIAEALEASSTPFLWSLRDTSKQYLPEGFLKRTSELGKIVPWAPQVQVLAHSSIGVFITHCGWNSVLETIAGGVPMIGRPFFGDHPINTWMVENVWKIGVRVEGGVFTKSSTMRALELVLSHEKGKKLKDQIGHLRELALKAVGPKGSSSQNFNNLLEVITGHNL.

Residues serine 20, histidine 22, and glutamine 83 each coordinate an anthocyanidin. Histidine 22 functions as the Proton acceptor in the catalytic mechanism. The active-site Charge relay is aspartate 118. Residue histidine 150 participates in an anthocyanidin binding. UDP-binding residues include serine 281, tryptophan 333, alanine 334, histidine 351, asparagine 355, serine 356, and glutamate 359. Glycine 374 provides a ligand contact to an anthocyanidin.

It belongs to the UDP-glycosyltransferase family. Expressed at low levels in stems and leaves. Expressed in ovaries.

The catalysed reaction is cyanidin + UDP-alpha-D-galactose = cyanidin 3-O-beta-D-galactoside + UDP + H(+). It participates in pigment biosynthesis; anthocyanin biosynthesis. Involved in anthocyanin biosynthesis by catalyzing the galactosylation of cyanidin. Required for the accumulation of anthocyanin in red-fleshed kiwifruit varieties. Seems to be the key enzyme regulating the accumulation of anthocyanin in red-fleshed kiwi fruits. This Actinidia chinensis var. chinensis (Chinese soft-hair kiwi) protein is Anthocyanidin 3-O-galactosyltransferase F3GT1.